The following is a 191-amino-acid chain: Cell number regulator 1 (191 aa).

Residues 13–44 form a disordered region; that stretch reads FSAGAPPTAPPPPAAYHQQQQQHGANMDTSRP. A compositionally biased stretch (low complexity) spans 27 to 37; that stretch reads AYHQQQQQHGA. A helical transmembrane segment spans residues 91–113; it reads IASGLVYGLICASTGMGCLYSCL.

This sequence belongs to the cornifelin family. In terms of tissue distribution, expressed in roots, coleoptiles, stalks and silks. Detected in leaves, apical meristems, immature ears and pericarps. Highest expression in coleoptiles and silks.

The protein localises to the membrane. Functionally, acts as a negative regulator of cell number. The protein is Cell number regulator 1 (CNR1) of Zea mays (Maize).